Reading from the N-terminus, the 392-residue chain is Probable protein phosphatase 2C 78 (392 aa).

Residues 39–342 (ASGEYSIAVA…DDITVVVVYL (304 aa)) form the PPM-type phosphatase domain. Mn(2+)-binding residues include Asp73, Gly74, Asp274, and Asp333.

Belongs to the PP2C family. Requires Mg(2+) as cofactor. Mn(2+) is required as a cofactor.

The enzyme catalyses O-phospho-L-seryl-[protein] + H2O = L-seryl-[protein] + phosphate. It carries out the reaction O-phospho-L-threonyl-[protein] + H2O = L-threonyl-[protein] + phosphate. In Oryza sativa subsp. japonica (Rice), this protein is Probable protein phosphatase 2C 78.